The following is a 253-amino-acid chain: ER membrane protein complex subunit 3 (253 aa).

Transmembrane regions (helical) follow at residues W10–M30, F126–M146, and S176–L196.

The protein belongs to the EMC3 family. In terms of assembly, component of the ER membrane protein complex (EMC), which is composed of EMC1, EMC2, EMC3, EMC4, EMC5 and EMC6.

The protein resides in the endoplasmic reticulum membrane. The EMC seems to be required for efficient folding of proteins in the endoplasmic reticulum (ER). In Saccharomyces cerevisiae (strain RM11-1a) (Baker's yeast), this protein is ER membrane protein complex subunit 3 (AIM27).